The chain runs to 548 residues: MAELTISAADIEGAIEDYVSSFSADTEREEIGTVIDAGDGIAHVEGLPSVMTQELLEFPGGVLGVALNLDEHSVGAVILGEFEKIEEGQQVKRTGEVLSVPVGDAFLGRVVNPLGQPIDGQGDIAAETRRALELQAPSVVQRQSVSEPLQTGIKAIDAMTPIGRGQRQLIIGDRKTGKTAVCVDTILNQREAWLTGDPKQQVRCVYVAIGQKGTTIASVKRALEEGGAMEYTTIVAAPASDAAGFKWLAPYTGSAIGQHWMYNGKHVLIVFDDLSKQADAYRAISLLLRRPPGREAFPGDVFYLHSRLLERCAKLSDELGGGSMTGLPIIETKANDISAFIPTNVISITDGQCFLESDLFNQGVRPAINVGVSVSRVGGAAQIKAMKEVAGSLRLDLSQYRELEAFAAFASDLDAASKAQLDRGARLVELLKQPQYSPLAVEEQVVAIFLGTQGHLDSVPVEDVQRFESELLEHVKASHSDIFDGIRETKKLSEEAEEKLVSVINEFKKGFQASDGSSVVVSENAEALDPEDLEKESVKVRKPAPKKA.

An ATP-binding site is contributed by 172-179 (GDRKTGKT).

Belongs to the ATPase alpha/beta chains family. As to quaternary structure, F-type ATPases have 2 components, CF(1) - the catalytic core - and CF(0) - the membrane proton channel. CF(1) has five subunits: alpha(3), beta(3), gamma(1), delta(1), epsilon(1). CF(0) has three main subunits: a(1), b(2) and c(9-12). The alpha and beta chains form an alternating ring which encloses part of the gamma chain. CF(1) is attached to CF(0) by a central stalk formed by the gamma and epsilon chains, while a peripheral stalk is formed by the delta and b chains.

The protein resides in the cell membrane. The catalysed reaction is ATP + H2O + 4 H(+)(in) = ADP + phosphate + 5 H(+)(out). Produces ATP from ADP in the presence of a proton gradient across the membrane. The alpha chain is a regulatory subunit. The polypeptide is ATP synthase subunit alpha (Mycolicibacterium smegmatis (strain ATCC 700084 / mc(2)155) (Mycobacterium smegmatis)).